The sequence spans 405 residues: Polyadenylate-binding protein RBP45B (405 aa).

Positions 1–19 (MMQQPPPGGILPHHAPPPS) are enriched in pro residues. A disordered region spans residues 1 to 54 (MMQQPPPGGILPHHAPPPSAQQQYGYQQPYGIAGAAPPPPQMWNPQAAAPPSVQ). The segment covering 20 to 35 (AQQQYGYQQPYGIAGA) has biased composition (low complexity). RRM domains follow at residues 62–143 (RTLW…WASL), 155–234 (YTIF…PAAS), and 261–333 (TTVF…WGRS). The segment at 379 to 405 (GGYQQTPQAGQQPPQQPPQQQQVGFSY) is disordered. The segment covering 380–405 (GYQQTPQAGQQPPQQPPQQQQVGFSY) has biased composition (low complexity).

It belongs to the polyadenylate-binding RBP45 family. As to quaternary structure, both isoform 1 and isoform 2 interact with poly(A)+ RNA in nucleus. In terms of tissue distribution, expressed in roots, leaves, stems, flowers, siliques, and seedlings. Present in immature anther tissues (tapetum cells) and mature pollen grains.

It is found in the nucleus. Functionally, heterogeneous nuclear ribonucleoprotein (hnRNP)-protein binding the poly(A) tail of mRNA and probably involved in some steps of pre-mRNA maturation. The protein is Polyadenylate-binding protein RBP45B (RBP45B) of Arabidopsis thaliana (Mouse-ear cress).